A 175-amino-acid chain; its full sequence is MSIDFKKYIASVKDFPNEGIIFRDITPILQDGEAFAAATHEIAEYAKSRQADVIVGPEARGFLVGTPVAIELGIGFVPARKPHKLPREVEAAAYDLEYGSNVLEMHKDAIKPGQRVVICDDLMATAGTMHATKELIERLGGKVVGAAFYIELTDLKGREKFPDVDIFSLVQYTGA.

The protein belongs to the purine/pyrimidine phosphoribosyltransferase family. As to quaternary structure, homodimer.

The protein resides in the cytoplasm. The enzyme catalyses AMP + diphosphate = 5-phospho-alpha-D-ribose 1-diphosphate + adenine. It functions in the pathway purine metabolism; AMP biosynthesis via salvage pathway; AMP from adenine: step 1/1. Its function is as follows. Catalyzes a salvage reaction resulting in the formation of AMP, that is energically less costly than de novo synthesis. In Lactobacillus delbrueckii subsp. bulgaricus (strain ATCC 11842 / DSM 20081 / BCRC 10696 / JCM 1002 / NBRC 13953 / NCIMB 11778 / NCTC 12712 / WDCM 00102 / Lb 14), this protein is Adenine phosphoribosyltransferase.